Reading from the N-terminus, the 305-residue chain is Tetraacyldisaccharide 4'-kinase (305 aa).

Position 39–46 (Ser-39–Thr-46) interacts with ATP.

The protein belongs to the LpxK family.

It catalyses the reaction a lipid A disaccharide + ATP = a lipid IVA + ADP + H(+). The protein operates within glycolipid biosynthesis; lipid IV(A) biosynthesis; lipid IV(A) from (3R)-3-hydroxytetradecanoyl-[acyl-carrier-protein] and UDP-N-acetyl-alpha-D-glucosamine: step 6/6. Its function is as follows. Transfers the gamma-phosphate of ATP to the 4'-position of a tetraacyldisaccharide 1-phosphate intermediate (termed DS-1-P) to form tetraacyldisaccharide 1,4'-bis-phosphate (lipid IVA). In Pseudoalteromonas atlantica (strain T6c / ATCC BAA-1087), this protein is Tetraacyldisaccharide 4'-kinase.